The primary structure comprises 372 residues: N-acetyllactosaminide beta-1,3-N-acetylglucosaminyltransferase 3 (372 aa).

At 1 to 10 (MKYLRHRRPN) the chain is on the cytoplasmic side. A helical; Signal-anchor for type II membrane protein transmembrane segment spans residues 11–31 (ATLILAIGAFTLLLFSLLVSP). At 32-372 (PTCKVQEQPP…LTCGNQTQIY (341 aa)) the chain is on the lumenal side. N64, N184, N202, N362, and N367 each carry an N-linked (GlcNAc...) asparagine glycan.

The protein belongs to the glycosyltransferase 31 family. As to expression, expressed in colon, jejunum, stomach, esophagus, placenta and trachea.

The protein resides in the golgi apparatus membrane. It carries out the reaction a 3-O-{beta-D-galactosyl-(1-&gt;3)-[N-acetyl-beta-D-glucosaminyl-(1-&gt;6)]-N-acetyl-alpha-D-galactosaminyl}-L-threonyl-[protein] + UDP-N-acetyl-alpha-D-glucosamine = 3-O-{beta-D-GlcNAc-(1-&gt;3)-beta-D-Gal-(1-&gt;3)-[beta-D-GlcNAc-(1-&gt;6)]-alpha-D-GalNAc}-L-threonyl-[protein] + UDP + H(+). It catalyses the reaction 3-O-{beta-D-galactosyl-(1-&gt;3)-[N-acetyl-beta-D-glucosaminyl-(1-&gt;6)]-N-acetyl-alpha-D-galactosaminyl}-L-seryl-[protein] + UDP-N-acetyl-alpha-D-glucosamine = 3-O-{beta-D-GlcNAc-(1-&gt;3)-beta-D-Gal-(1-&gt;3)-[beta-D-GlcNAc-(1-&gt;6)]-alpha-D-GalNAc}-L-seryl-[protein] + UDP + H(+). The catalysed reaction is a beta-D-galactosyl-(1-&gt;4)-N-acetyl-beta-D-glucosaminyl derivative + UDP-N-acetyl-alpha-D-glucosamine = an N-acetyl-beta-D-glucosaminyl-(1-&gt;3)-beta-D-galactosyl-(1-&gt;4)-N-acetyl-beta-D-glucosaminyl derivative + UDP + H(+). Its pathway is protein modification; protein glycosylation. Functionally, beta-1,3-N-acetylglucosaminyltransferase involved in the synthesis of poly-N-acetyllactosamine. Has activity for type 2 oligosaccharides. Also acts as a core1-1,3-N-acetylglucosaminyltransferase (Core1-beta3GlcNAcT) to form the 6-sulfo sialyl Lewis x on extended core1 O-glycans. This is N-acetyllactosaminide beta-1,3-N-acetylglucosaminyltransferase 3 (B3GNT3) from Homo sapiens (Human).